A 275-amino-acid chain; its full sequence is Calcyphosin (275 aa).

The interval proline 59–methionine 87 is disordered. 4 consecutive EF-hand domains span residues serine 107–valine 142, leucine 143–glutamine 178, alanine 179–proline 214, and threonine 222–serine 258. 14 residues coordinate Ca(2+): aspartate 120, aspartate 122, serine 124, serine 126, glutamate 131, aspartate 156, asparagine 158, serine 160, threonine 162, glutamate 167, aspartate 192, serine 194, aspartate 196, and aspartate 203. Serine 126 carries the phosphoserine; by PKA modification.

As to quaternary structure, monomer. Does not form oligomers in the presence of calcium.

It localises to the cytoplasm. Functionally, calcium-binding protein. May play a role in cellular signaling events (Potential). This chain is Calcyphosin, found in Homo sapiens (Human).